The sequence spans 630 residues: Pentatricopeptide repeat-containing protein At1g62670, mitochondrial (630 aa).

The transit peptide at 1–22 (MRISFAIASTAKRFVHRSLVVR) directs the protein to the mitochondrion. 16 PPR repeats span residues 44 to 79 (TSYD…RPFP), 80 to 114 (SIIE…GIPH), 115 to 149 (NHYT…GYEP), 150 to 184 (NIVT…GYQP), 185 to 219 (NTVT…GCQP), 220 to 254 (DLVT…KLEP), 255 to 289 (GVLI…GIRP), 290 to 324 (NVVT…KINP), 325 to 359 (DVFT…SIDP), 360 to 394 (SIVT…HCFP), 395 to 429 (DVVT…GLVG), 430 to 464 (NTVT…GVPP), 465 to 499 (NIMT…KMEP), 500 to 534 (TIYT…GVKP), 535 to 569 (DVVA…GTLP), and 570 to 604 (NSGC…GFAG).

This sequence belongs to the PPR family. P subfamily.

The protein resides in the mitochondrion. This chain is Pentatricopeptide repeat-containing protein At1g62670, mitochondrial, found in Arabidopsis thaliana (Mouse-ear cress).